The chain runs to 201 residues: 3-isopropylmalate dehydratase small subunit (201 aa).

This sequence belongs to the LeuD family. LeuD type 1 subfamily. As to quaternary structure, heterodimer of LeuC and LeuD.

It catalyses the reaction (2R,3S)-3-isopropylmalate = (2S)-2-isopropylmalate. It participates in amino-acid biosynthesis; L-leucine biosynthesis; L-leucine from 3-methyl-2-oxobutanoate: step 2/4. In terms of biological role, catalyzes the isomerization between 2-isopropylmalate and 3-isopropylmalate, via the formation of 2-isopropylmaleate. The chain is 3-isopropylmalate dehydratase small subunit from Enterobacter sp. (strain 638).